The chain runs to 258 residues: Ciliogenesis and planar polarity effector 2 (258 aa).

The segment at 50–258 is small GTPase-like; that stretch reads SIDTASYKIF…LPNPPESAPE (209 aa). Positions 64, 65, 67, 68, 69, 70, 82, 84, 87, 176, 178, and 206 each coordinate GTP.

Belongs to the small GTPase superfamily. Rab family. As to quaternary structure, interacts with FUZ. Associates with the CPLANE (ciliogenesis and planar polarity effectors) complex via its interaction with FUZ.

It is found in the cytoplasm. Its subcellular location is the cytoskeleton. The protein localises to the cilium basal body. The protein resides in the microtubule organizing center. It localises to the centrosome. It is found in the centriole. In terms of biological role, required for efficient primary cilia initiation, regulating a late step in cilia initiation. Plays a role in the final maturation of the mother centriole and ciliary vesicle that allows extension of the ciliary axoneme. The protein is Ciliogenesis and planar polarity effector 2 of Homo sapiens (Human).